Reading from the N-terminus, the 307-residue chain is G-protein coupled receptor 35 (307 aa).

The Extracellular segment spans residues 1–18 (MNSTTCNSTLTWPASVNN). Asn-2 and Asn-7 each carry an N-linked (GlcNAc...) asparagine glycan. The helical transmembrane segment at 19–39 (FFIIYSALLLVLGLLLNSVAL) threads the bilayer. The Cytoplasmic segment spans residues 40–53 (WVFCYRMHQWTETR). The chain crosses the membrane as a helical span at residues 54-74 (IYMTNLAVADLCLLCSLPFVL). Residues 75-88 (YSLKYSSSDTPVCQ) are Extracellular-facing. A disulfide bond links Cys-87 and Cys-160. Residues 89–110 (LSQGIYLANRYMSISLVTAIAV) form a helical membrane-spanning segment. Over 111–129 (DRYVAVRHPLRARELRSPR) the chain is Cytoplasmic. The chain crosses the membrane as a helical span at residues 130 to 150 (QAAAVCVALWVIVVTSLVVRW). The Extracellular segment spans residues 151-176 (RLGMQEGGFCFSSQTRRNFSTTAFSL). The helical transmembrane segment at 177-197 (LGFYLPLAIVVFCSLQVVTVL) threads the bilayer. Over 198–217 (SRRPAADVGQAEATQKATHM) the chain is Cytoplasmic. Residues 218 to 238 (VWANLAVFVICFLPLHVVLTV) form a helical membrane-spanning segment. The Extracellular portion of the chain corresponds to 239-257 (QVSLNLNTCAARDTFSRAL). Residues 258–278 (SITGKLSDTNCCLDAICYYYM) form a helical membrane-spanning segment. The Cytoplasmic portion of the chain corresponds to 279–307 (AREFQEASKPATSSNTPHKSQDSQILSLT). 4 positions are modified to phosphoserine: Ser-286, Ser-292, Ser-298, and Ser-301. The tract at residues 288–307 (PATSSNTPHKSQDSQILSLT) is disordered.

Belongs to the G-protein coupled receptor 1 family. Multiply phosphorylated in clusters of serines and threonines in the C-terminal tail. Phosphorylation of Ser-298 and Ser-301 is mediated by GRK5 and/or GRK6. Predominantly expressed in immune and gastrointestinal tissues. Strongly GPR35 expressed in colonic macrophages.

It is found in the cell membrane. Its function is as follows. G-protein coupled receptor that binds to several ligands including the tryptophan metabolite kynurenic acid (KYNA), lysophosphatidic acid (LPA) or 5-hydroxyindoleacetic acid (5-HIAA) with high affinity, leading to rapid and transient activation of numerous intracellular signaling pathways. Plays a role in neutrophil recruitment to sites of inflammation and bacterial clearance through the major serotonin metabolite 5-HIAA that acts as a physiological ligand. Stimulates lipid metabolism, thermogenic, and anti-inflammatory gene expression in adipose tissue once activated by kynurenic acid. In macrophages, activation by lysophosphatidic acid promotes GPR35-induced signaling with a distinct transcriptional profile characterized by TNF production associated with ERK and NF-kappa-B activation. In turn, induces chemotaxis of macrophages. The protein is G-protein coupled receptor 35 (Gpr35) of Mus musculus (Mouse).